The primary structure comprises 927 residues: Isoleucine--tRNA ligase (927 aa).

Positions 60 to 70 match the 'HIGH' region motif; sequence PYANGNIHLGH. Position 557 (glutamate 557) interacts with L-isoleucyl-5'-AMP. The 'KMSKS' region motif lies at 598 to 602; it reads KMSKS. Residue lysine 601 participates in ATP binding. Residues cysteine 895, cysteine 898, cysteine 915, and cysteine 918 each contribute to the Zn(2+) site.

It belongs to the class-I aminoacyl-tRNA synthetase family. IleS type 1 subfamily. Monomer. It depends on Zn(2+) as a cofactor.

It localises to the cytoplasm. It catalyses the reaction tRNA(Ile) + L-isoleucine + ATP = L-isoleucyl-tRNA(Ile) + AMP + diphosphate. Its function is as follows. Catalyzes the attachment of isoleucine to tRNA(Ile). As IleRS can inadvertently accommodate and process structurally similar amino acids such as valine, to avoid such errors it has two additional distinct tRNA(Ile)-dependent editing activities. One activity is designated as 'pretransfer' editing and involves the hydrolysis of activated Val-AMP. The other activity is designated 'posttransfer' editing and involves deacylation of mischarged Val-tRNA(Ile). In Syntrophomonas wolfei subsp. wolfei (strain DSM 2245B / Goettingen), this protein is Isoleucine--tRNA ligase.